The chain runs to 429 residues: Trigger factor (429 aa).

Residues 162 to 247 (DDTVDLAFEG…INAIKKLRQP (86 aa)) form the PPIase FKBP-type domain.

This sequence belongs to the FKBP-type PPIase family. Tig subfamily.

It is found in the cytoplasm. The enzyme catalyses [protein]-peptidylproline (omega=180) = [protein]-peptidylproline (omega=0). Functionally, involved in protein export. Acts as a chaperone by maintaining the newly synthesized protein in an open conformation. Functions as a peptidyl-prolyl cis-trans isomerase. The chain is Trigger factor from Fusobacterium nucleatum subsp. nucleatum (strain ATCC 25586 / DSM 15643 / BCRC 10681 / CIP 101130 / JCM 8532 / KCTC 2640 / LMG 13131 / VPI 4355).